Here is a 431-residue protein sequence, read N- to C-terminus: Levansucrase LscC (431 aa).

Positions 61, 62, 148, 218, and 219 each coordinate sucrose. Aspartate 62 (nucleophile) is an active-site residue. Glutamate 303 (proton donor/acceptor) is an active-site residue.

It belongs to the glycosyl hydrolase 68 family.

The protein resides in the periplasm. It catalyses the reaction [6)-beta-D-fructofuranosyl-(2-&gt;](n) alpha-D-glucopyranoside + sucrose = [6)-beta-D-fructofuranosyl-(2-&gt;](n+1) alpha-D-glucopyranoside + D-glucose. Its function is as follows. Catalyzes the synthesis of levan, a fructose polymer, by transferring the fructosyl moiety from sucrose to a growing acceptor molecule. The protein is Levansucrase LscC of Pseudomonas savastanoi pv. glycinea (Pseudomonas syringae pv. glycinea).